Here is a 115-residue protein sequence, read N- to C-terminus: Tyrosine-protein phosphatase 22 (115 aa).

The Tyrosine-protein phosphatase domain occupies 1 to 115 (WLMIVEQKCR…ETGGDAPMVV (115 aa)). A substrate-binding site is contributed by Asp83.

It belongs to the protein-tyrosine phosphatase family.

It carries out the reaction O-phospho-L-tyrosyl-[protein] + H2O = L-tyrosyl-[protein] + phosphate. The sequence is that of Tyrosine-protein phosphatase 22 (STY-22) from Styela plicata (Wrinkled sea squirt).